The following is a 140-amino-acid chain: Cysteine desulfuration protein SufE (140 aa).

Residue Cys51 is the Cysteine persulfide intermediate of the active site.

Belongs to the SufE family. Homodimer. Interacts with SufS.

It localises to the cytoplasm. Its pathway is cofactor biosynthesis; iron-sulfur cluster biosynthesis. Participates in cysteine desulfuration mediated by SufS. Cysteine desulfuration mobilizes sulfur from L-cysteine to yield L-alanine and constitutes an essential step in sulfur metabolism for biosynthesis of a variety of sulfur-containing biomolecules. Functions as a sulfur acceptor for SufS, by mediating the direct transfer of the sulfur atom from the S-sulfanylcysteine of SufS, an intermediate product of cysteine desulfuration process. The chain is Cysteine desulfuration protein SufE from Yersinia pseudotuberculosis serotype O:1b (strain IP 31758).